The following is a 167-amino-acid chain: Fimbrial adapter PapF (167 aa).

Residues 1–18 form the signal peptide; the sequence is MIRLSLFISLLLTSVAVL.

The protein resides in the secreted. Its subcellular location is the fimbrium. Its function is as follows. Adapter that links the PapG adhesin to the distal end of the tip fibrillum. PapF is required for the correct presentation of the adhesin at the distal end of the tip fibrillum. Pili are polar filaments radiating from the surface of the bacterium to a length of 0.5-1.5 micrometers and numbering 100-300 per cell, and enable bacteria to colonize the epithelium of specific host organs. This chain is Fimbrial adapter PapF (papF), found in Escherichia coli.